The sequence spans 749 residues: uncharacterized protein (749 aa).

A Helicase ATP-binding domain is found at 63-243 (FQYVQKGESI…QLTGKPMRLV (181 aa)). Residue 76–83 (TPTASGKT) participates in ATP binding. A DEVH box motif is present at residues 185–188 (DELH). A Helicase C-terminal domain is found at 276 to 430 (EVNELAKEFL…SARINPENLI (155 aa)).

The protein belongs to the helicase family.

This is an uncharacterized protein from Bacillus subtilis (strain 168).